We begin with the raw amino-acid sequence, 1116 residues long: MAP kinase kinase kinase mkh1 (1116 aa).

Disordered stretches follow at residues 510–601 (LKMP…SNSL) and 618–647 (ALDE…ENHH). Over residues 515 to 531 (NSGSSAPQSPSSNTSAS) the composition is skewed to low complexity. Residues 553 to 569 (LRRKNTLTRRPSIRHAR) are compositionally biased toward basic residues. Residues 588–601 (SFDPKASSKSSNSL) are compositionally biased toward low complexity. The segment covering 634–647 (PKQSSSQVPKENHH) has biased composition (polar residues). Residues 825–1094 (WMKGELIGNG…AEELLNHPFM (270 aa)) form the Protein kinase domain. ATP is bound by residues 831–839 (IGNGTYGKV) and K854. D955 acts as the Proton acceptor in catalysis.

The protein belongs to the protein kinase superfamily. STE Ser/Thr protein kinase family. MAP kinase kinase kinase subfamily.

The catalysed reaction is L-seryl-[protein] + ATP = O-phospho-L-seryl-[protein] + ADP + H(+). It catalyses the reaction L-threonyl-[protein] + ATP = O-phospho-L-threonyl-[protein] + ADP + H(+). In terms of biological role, may regulate cell morphology, cell wall integrity, salt resistance, cell cycle reentry from stationary-phase arrest, and filamentous growth in response to stress. Activates the MAP kinase kinase skh1/pek1 by phosphorylation. The sequence is that of MAP kinase kinase kinase mkh1 (mkh1) from Schizosaccharomyces pombe (strain 972 / ATCC 24843) (Fission yeast).